The primary structure comprises 216 residues: MKIGLFGGSFNPVHLTHLDVANGVLKRLGLDKVLFVPAGNPYHKEQGEMLSAELRYELVKKAVQGCSGLGVSDIDISADGPTYTVDTLREASRRYPDAELYFIMGQDSLETFTTWKGWQSIPELANVVAVSRAEADHGAMSQELKRIFPEVVESGQDVWQMKGGKSIYIIGDFDFVISSTLVREEWKKGRDVSKLVPKAVAECMNEKGDKLKKFWR.

The protein belongs to the NadD family.

It catalyses the reaction nicotinate beta-D-ribonucleotide + ATP + H(+) = deamido-NAD(+) + diphosphate. It participates in cofactor biosynthesis; NAD(+) biosynthesis; deamido-NAD(+) from nicotinate D-ribonucleotide: step 1/1. Functionally, catalyzes the reversible adenylation of nicotinate mononucleotide (NaMN) to nicotinic acid adenine dinucleotide (NaAD). This chain is Probable nicotinate-nucleotide adenylyltransferase, found in Maridesulfovibrio salexigens (strain ATCC 14822 / DSM 2638 / NCIMB 8403 / VKM B-1763) (Desulfovibrio salexigens).